The following is a 95-amino-acid chain: Aspartyl/glutamyl-tRNA(Asn/Gln) amidotransferase subunit C (95 aa).

Belongs to the GatC family. In terms of assembly, heterotrimer of A, B and C subunits.

It carries out the reaction L-glutamyl-tRNA(Gln) + L-glutamine + ATP + H2O = L-glutaminyl-tRNA(Gln) + L-glutamate + ADP + phosphate + H(+). The enzyme catalyses L-aspartyl-tRNA(Asn) + L-glutamine + ATP + H2O = L-asparaginyl-tRNA(Asn) + L-glutamate + ADP + phosphate + 2 H(+). Allows the formation of correctly charged Asn-tRNA(Asn) or Gln-tRNA(Gln) through the transamidation of misacylated Asp-tRNA(Asn) or Glu-tRNA(Gln) in organisms which lack either or both of asparaginyl-tRNA or glutaminyl-tRNA synthetases. The reaction takes place in the presence of glutamine and ATP through an activated phospho-Asp-tRNA(Asn) or phospho-Glu-tRNA(Gln). This Halothermothrix orenii (strain H 168 / OCM 544 / DSM 9562) protein is Aspartyl/glutamyl-tRNA(Asn/Gln) amidotransferase subunit C.